A 217-amino-acid chain; its full sequence is Probable transaldolase (217 aa).

The Schiff-base intermediate with substrate role is filled by K83.

The protein belongs to the transaldolase family. Type 3B subfamily.

It localises to the cytoplasm. The catalysed reaction is D-sedoheptulose 7-phosphate + D-glyceraldehyde 3-phosphate = D-erythrose 4-phosphate + beta-D-fructose 6-phosphate. The protein operates within carbohydrate degradation; pentose phosphate pathway; D-glyceraldehyde 3-phosphate and beta-D-fructose 6-phosphate from D-ribose 5-phosphate and D-xylulose 5-phosphate (non-oxidative stage): step 2/3. In terms of biological role, transaldolase is important for the balance of metabolites in the pentose-phosphate pathway. The polypeptide is Probable transaldolase (Sinorhizobium medicae (strain WSM419) (Ensifer medicae)).